We begin with the raw amino-acid sequence, 293 residues long: 16S rRNA (guanine(1405)-N(7))-methyltransferase (293 aa).

S-adenosyl-L-methionine contacts are provided by residues F47, 80 to 82, R86, A111, D134, 160 to 161, L176, and Q185; these read HAS and DL. Positions 258-274 are enriched in low complexity; sequence GRPAPAEGAAEPGATRP. The disordered stretch occupies residues 258-293; that stretch reads GRPAPAEGAAEPGATRPVVDVPATARPDADRVDPTG. Over residues 284-293 the composition is skewed to basic and acidic residues; it reads PDADRVDPTG.

The protein belongs to the methyltransferase superfamily. Aminoglycoside resistance family.

The enzyme catalyses guanosine(1405) in 16S rRNA + S-adenosyl-L-methionine = N(7)-methylguanosine(1405) in 16S rRNA + S-adenosyl-L-homocysteine. Its function is as follows. Specifically methylates the N(7) position of guanine 1405 in 16S rRNA. Confers resistance to aminoglycosides. This Micromonospora olivasterospora protein is 16S rRNA (guanine(1405)-N(7))-methyltransferase (fmrO).